The chain runs to 1110 residues: Coiled-coil domain-containing protein 150 (1110 aa).

Coiled-coil stretches lie at residues leucine 122 to serine 250, glutamine 288 to asparagine 313, alanine 413 to asparagine 695, and serine 728 to arginine 1048.

This Mus musculus (Mouse) protein is Coiled-coil domain-containing protein 150 (Ccdc150).